The chain runs to 347 residues: CD5 antigen-like (347 aa).

The first 19 residues, 1–19, serve as a signal peptide directing secretion; the sequence is MALLFSLILAICTRPGFLA. SRCR domains follow at residues 24-125, 138-239, and 244-346; these read VRLV…ASCE, VRLA…VECE, and LRLV…VICS. 11 disulfide bridges follow: cysteine 33-cysteine 67, cysteine 49-cysteine 114, cysteine 62-cysteine 124, cysteine 96-cysteine 106, cysteine 163-cysteine 228, cysteine 176-cysteine 238, cysteine 208-cysteine 218, cysteine 253-cysteine 287, cysteine 269-cysteine 335, cysteine 282-cysteine 345, and cysteine 315-cysteine 325.

As to quaternary structure, interacts with FASN; the interaction is direct. Interacts (via SRCR2 and SRCR3) with pentameric IgM (via Fc region); disulfide-linked. In terms of processing, not N-glycosylated. Probably not O-glycosylated. As to expression, expressed in spleen, lymph node, thymus, bone marrow, and fetal liver, but not in non-lymphoid tissues.

The protein resides in the secreted. It is found in the cytoplasm. Secreted protein that acts as a key regulator of lipid synthesis: mainly expressed by macrophages in lymphoid and inflamed tissues and regulates mechanisms in inflammatory responses, such as infection or atherosclerosis. Able to inhibit lipid droplet size in adipocytes. Following incorporation into mature adipocytes via CD36-mediated endocytosis, associates with cytosolic FASN, inhibiting fatty acid synthase activity and leading to lipolysis, the degradation of triacylglycerols into glycerol and free fatty acids (FFA). CD5L-induced lipolysis occurs with progression of obesity: participates in obesity-associated inflammation following recruitment of inflammatory macrophages into adipose tissues, a cause of insulin resistance and obesity-related metabolic disease. Regulation of intracellular lipids mediated by CD5L has a direct effect on transcription regulation mediated by nuclear receptors ROR-gamma (RORC). Acts as a key regulator of metabolic switch in T-helper Th17 cells. Regulates the expression of pro-inflammatory genes in Th17 cells by altering the lipid content and limiting synthesis of cholesterol ligand of RORC, the master transcription factor of Th17-cell differentiation. CD5L is mainly present in non-pathogenic Th17 cells, where it decreases the content of polyunsaturated fatty acyls (PUFA), affecting two metabolic proteins MSMO1 and CYP51A1, which synthesize ligands of RORC, limiting RORC activity and expression of pro-inflammatory genes. Participates in obesity-associated autoimmunity via its association with IgM, interfering with the binding of IgM to Fcalpha/mu receptor and enhancing the development of long-lived plasma cells that produce high-affinity IgG autoantibodies. Also acts as an inhibitor of apoptosis in macrophages: promotes macrophage survival from the apoptotic effects of oxidized lipids in case of atherosclerosis. Involved in early response to microbial infection against various pathogens by acting as a pattern recognition receptor and by promoting autophagy. This chain is CD5 antigen-like (CD5L), found in Homo sapiens (Human).